A 200-amino-acid chain; its full sequence is Holliday junction branch migration complex subunit RuvA (200 aa).

Positions 1 to 64 are domain I; it reads MITSIQGTLV…EDSQTLYGFA (64 aa). A domain II region spans residues 65-144; it reads SPAERDFFRL…ATGAAPGLAT (80 aa). Positions 145–151 are flexible linker; sequence QPAAAAS. Residues 152–200 form a domain III region; that stretch reads PGASAHRDAVAALVALGYRSADADEAVRRASLALGEAATTESLIKKALS.

This sequence belongs to the RuvA family. As to quaternary structure, homotetramer. Forms an RuvA(8)-RuvB(12)-Holliday junction (HJ) complex. HJ DNA is sandwiched between 2 RuvA tetramers; dsDNA enters through RuvA and exits via RuvB. An RuvB hexamer assembles on each DNA strand where it exits the tetramer. Each RuvB hexamer is contacted by two RuvA subunits (via domain III) on 2 adjacent RuvB subunits; this complex drives branch migration. In the full resolvosome a probable DNA-RuvA(4)-RuvB(12)-RuvC(2) complex forms which resolves the HJ.

The protein localises to the cytoplasm. In terms of biological role, the RuvA-RuvB-RuvC complex processes Holliday junction (HJ) DNA during genetic recombination and DNA repair, while the RuvA-RuvB complex plays an important role in the rescue of blocked DNA replication forks via replication fork reversal (RFR). RuvA specifically binds to HJ cruciform DNA, conferring on it an open structure. The RuvB hexamer acts as an ATP-dependent pump, pulling dsDNA into and through the RuvAB complex. HJ branch migration allows RuvC to scan DNA until it finds its consensus sequence, where it cleaves and resolves the cruciform DNA. This is Holliday junction branch migration complex subunit RuvA from Opitutus terrae (strain DSM 11246 / JCM 15787 / PB90-1).